Reading from the N-terminus, the 156-residue chain is Probable succinate transporter subunit YjjB (156 aa).

Helical transmembrane passes span Trp7–Phe27, Phe54–Ile74, Val86–Ile106, and Phe128–Trp148.

This sequence belongs to the ThrE exporter (TC 2.A.79) family. In terms of assembly, the transporter is composed of YjjB and YjjP.

The protein localises to the cell inner membrane. Involved in succinate export with YjjP. Both proteins are required for export. In Pectobacterium carotovorum subsp. carotovorum (strain PC1), this protein is Probable succinate transporter subunit YjjB.